A 138-amino-acid polypeptide reads, in one-letter code: uncharacterized protein (138 aa).

Residues 89–138 (DDYEDDFEDSDFQDGDFDDFEDEDGFDDDDDFEDDDFEYEDEDNDLDFDE) form a disordered region.

This is an uncharacterized protein from Treponema pallidum (strain Nichols).